Here is a 64-residue protein sequence, read N- to C-terminus: LKDGYIVDDKNCTFFCGRNAYCNDECKKKGGESGYCQWASPYGNACWCYKLPDRVSIKEKGRCN.

One can recognise an LCN-type CS-alpha/beta domain in the interval 2–64; that stretch reads KDGYIVDDKN…VSIKEKGRCN (63 aa). 4 disulfide bridges follow: Cys-12/Cys-63, Cys-16/Cys-36, Cys-22/Cys-46, and Cys-26/Cys-48. Asn-64 is subject to Asparagine amide.

The protein belongs to the long (4 C-C) scorpion toxin superfamily. Sodium channel inhibitor family. Alpha subfamily. As to expression, expressed by the venom gland.

The protein localises to the secreted. Alpha toxins bind voltage-independently at site-3 of sodium channels (Nav) and inhibit the inactivation of the activated channels, thereby blocking neuronal transmission. Is active on mammals and bind with high affinity to rat brain synaptosome. Does not display phospholipid-binding activity. This is Alpha-mammal toxin Lqq5 from Leiurus quinquestriatus quinquestriatus (Egyptian scorpion).